Consider the following 155-residue polypeptide: Ribonuclease H (155 aa).

The RNase H type-1 domain occupies 1 to 142 (MTKQVEIFTD…CDELARAAAM (142 aa)). Residues Asp10, Glu48, Asp70, and Asp134 each contribute to the Mg(2+) site.

This sequence belongs to the RNase H family. Monomer. It depends on Mg(2+) as a cofactor.

It is found in the cytoplasm. It catalyses the reaction Endonucleolytic cleavage to 5'-phosphomonoester.. In terms of biological role, endonuclease that specifically degrades the RNA of RNA-DNA hybrids. The sequence is that of Ribonuclease H from Enterobacter sp. (strain 638).